Here is a 585-residue protein sequence, read N- to C-terminus: Glycerol-3-phosphate dehydrogenase 2 (585 aa).

An FAD-binding site is contributed by 37–65 (DVVVIGGGVVGSGCALDAATRGLKVALVE).

It belongs to the FAD-dependent glycerol-3-phosphate dehydrogenase family. Requires FAD as cofactor.

Its subcellular location is the cytoplasm. The enzyme catalyses a quinone + sn-glycerol 3-phosphate = dihydroxyacetone phosphate + a quinol. This is Glycerol-3-phosphate dehydrogenase 2 (glpD2) from Mycobacterium bovis (strain ATCC BAA-935 / AF2122/97).